The following is a 376-amino-acid chain: Heptahelical transmembrane protein ADIPOR1 (376 aa).

The Cytoplasmic segment spans residues 1 to 90; it reads MGEEAAMATM…LSLFSWHNET (90 aa). The tract at residues 20 to 46 is disordered; sequence PAAAPAPAKGGGSKKKRKQQKREEKRK. A helical transmembrane segment spans residues 91-111; that stretch reads INIWTHLLGFVLFFGLTVLHL. The Extracellular segment spans residues 112–179; that stretch reads GQYFPQVADL…AAAAATTRWP (68 aa). The helical transmembrane segment at 180–200 threads the bilayer; it reads FFVFLAGAMFCLLSSAACHLL. Residues 201-216 are Cytoplasmic-facing; it reads SCHSHRLNLFLIRLDY. The chain crosses the membrane as a helical span at residues 217–237; it reads TGIAVMIVVSFFPPIYYIFQC. Residues 238 to 240 are Extracellular-facing; it reads EPR. The helical transmembrane segment at 241-261 threads the bilayer; that stretch reads WQVVYLSAITAAGVATVYALM. Residues 262-274 are Cytoplasmic-facing; it reads SPRLSAARYRAHR. Residues 275 to 295 traverse the membrane as a helical segment; sequence ALLFVAMGLSGVVPAAHAVAV. Over 296–303 the chain is Extracellular; the sequence is NWHEPRRN. The chain crosses the membrane as a helical span at residues 304-324; the sequence is VTLAYEGAMAASYLAGTAFYL. At 325-344 the chain is on the cytoplasmic side; the sequence is TRVPERWRPGMFDLCGHSHQ. The chain crosses the membrane as a helical span at residues 345–365; that stretch reads IFHALVIAGALAHYAAAIVFI. Residues 366-376 lie on the Extracellular side of the membrane; sequence QARDEMGCPAP.

This sequence belongs to the ADIPOR family.

Its subcellular location is the membrane. In terms of biological role, may play a role in abiotic stress response. The protein is Heptahelical transmembrane protein ADIPOR1 (ADIPOR1) of Oryza sativa subsp. japonica (Rice).